A 767-amino-acid polypeptide reads, in one-letter code: DNA topoisomerase 1 (767 aa).

Over residues Met-1–Lys-23 the composition is skewed to basic and acidic residues. Residues Met-1–Glu-200 form a disordered region. Ser-2 carries the N-acetylserine modification. Ser-2 and Ser-10 each carry phosphoserine. Basic residues predominate over residues His-24–Lys-39. Residues Lys-40–Asn-110 are compositionally biased toward basic and acidic residues. Position 59 is a phosphoserine (Ser-59). Lys-103 is covalently cross-linked (Glycyl lysine isopeptide (Lys-Gly) (interchain with G-Cter in SUMO2)). A Glycyl lysine isopeptide (Lys-Gly) (interchain with G-Cter in SUMO); alternate cross-link involves residue Lys-105. Lys-105 participates in a covalent cross-link: Glycyl lysine isopeptide (Lys-Gly) (interchain with G-Cter in SUMO2); alternate. Residue Ser-114 is modified to Phosphoserine. A Glycyl lysine isopeptide (Lys-Gly) (interchain with G-Cter in SUMO); alternate cross-link involves residue Lys-119. Lys-119 is covalently cross-linked (Glycyl lysine isopeptide (Lys-Gly) (interchain with G-Cter in SUMO2); alternate). Residue Lys-119 forms a Glycyl lysine isopeptide (Lys-Gly) (interchain with G-Cter in SUMO1); alternate linkage. Residues Pro-131–Glu-168 are compositionally biased toward basic and acidic residues. Glycyl lysine isopeptide (Lys-Gly) (interchain with G-Cter in SUMO2) cross-links involve residues Lys-136 and Lys-150. A Glycyl lysine isopeptide (Lys-Gly) (interchain with G-Cter in SUMO); alternate cross-link involves residue Lys-155. A Glycyl lysine isopeptide (Lys-Gly) (interchain with G-Cter in SUMO2); alternate cross-link involves residue Lys-155. Residues Lys-160 and Lys-166 each participate in a glycyl lysine isopeptide (Lys-Gly) (interchain with G-Cter in SUMO2) cross-link. A Glycyl lysine isopeptide (Lys-Gly) (interchain with G-Cter in SUMO2); alternate cross-link involves residue Lys-174. Lys-174 is subject to N6-acetyllysine; alternate. A compositionally biased stretch (basic and acidic residues) spans Lys-181 to Glu-200. Residue Lys-206 forms a Glycyl lysine isopeptide (Lys-Gly) (interchain with G-Cter in SUMO2) linkage. Position 282 is an N6-acetyllysine (Lys-282). Residue Lys-338 forms a Glycyl lysine isopeptide (Lys-Gly) (interchain with G-Cter in SUMO2) linkage. Interaction with DNA stretches follow at residues Lys-427 to Tyr-428 and Arg-490 to Lys-495. Positions Ser-434 to Phe-767 constitute a Topo IB-type catalytic domain. Ser-508 is modified (phosphoserine; by CK2). Lys-551 is covalently cross-linked (Glycyl lysine isopeptide (Lys-Gly) (interchain with G-Cter in SUMO2)). The segment at Thr-587–Lys-589 is interaction with DNA. Glycyl lysine isopeptide (Lys-Gly) (interchain with G-Cter in SUMO2) cross-links involve residues Lys-644, Lys-702, and Lys-714. Tyr-725 acts as the O-(3'-phospho-DNA)-tyrosine intermediate in catalysis.

The protein belongs to the type IB topoisomerase family. Monomer. Interacts with ERCC6. Interacts with TPRN; TPRN interacts with a number of DNA damage response proteins, is recruited to sites of DNA damage and may play a role in DNA damage repair. In terms of processing, sumoylated. Lys-119 is the main site of sumoylation. Sumoylation plays a role in partitioning TOP1 between nucleoli and nucleoplasm. Levels are dramatically increased on camptothecin (CPT) treatment. Phosphorylation at Ser-508 by CK2 increases binding to supercoiled DNA and sensitivity to camptothecin.

Its subcellular location is the nucleus. The protein localises to the nucleolus. It localises to the nucleoplasm. The enzyme catalyses ATP-independent breakage of single-stranded DNA, followed by passage and rejoining.. Releases the supercoiling and torsional tension of DNA introduced during the DNA replication and transcription by transiently cleaving and rejoining one strand of the DNA duplex. Introduces a single-strand break via transesterification at a target site in duplex DNA. The scissile phosphodiester is attacked by the catalytic tyrosine of the enzyme, resulting in the formation of a DNA-(3'-phosphotyrosyl)-enzyme intermediate and the expulsion of a 5'-OH DNA strand. The free DNA strand then rotates around the intact phosphodiester bond on the opposing strand, thus removing DNA supercoils. Finally, in the religation step, the DNA 5'-OH attacks the covalent intermediate to expel the active-site tyrosine and restore the DNA phosphodiester backbone. Regulates the alternative splicing of tissue factor (F3) pre-mRNA in endothelial cells. Involved in the circadian transcription of the core circadian clock component BMAL1 by altering the chromatin structure around the ROR response elements (ROREs) on the BMAL1 promoter. The chain is DNA topoisomerase 1 (Top1) from Rattus norvegicus (Rat).